We begin with the raw amino-acid sequence, 364 residues long: F-box protein At1g59680 (364 aa).

An F-box domain is found at 2–49 (TTMSDLSVDLVGEILSRVPLTSLSAVRCTCKSWNTLSKHQIFGKAELA).

The polypeptide is F-box protein At1g59680 (Arabidopsis thaliana (Mouse-ear cress)).